The sequence spans 370 residues: Forkhead box protein I1-A (370 aa).

3 disordered regions span residues 1–28, 212–269, and 342–370; these read MNPV…AQEA, DNGN…CPSP, and SSLP…QGRY. The segment at residues 127 to 221 is a DNA-binding region (fork-head); sequence RPPYSYSALI…DNGNFRRKRK (95 aa). A compositionally biased stretch (basic and acidic residues) spans 232 to 245; it reads AKREEDHVSPKGKE. Residues 349–370 show a composition bias toward low complexity; that stretch reads QKQPPYLQQLHPQQSPLYQGRY.

As to expression, initially localized to the animal hemisphere (the presumptive ectoderm) of early-mid blastula embryos. Becomes restricted to head placodes, excluding the otic placodes, by the tailbud stages.

It is found in the nucleus. Its function is as follows. Transcription factor. Essential for ventral specification of the early cephalic (head) ectoderm during gastrulation, playing a role in the non-neural versus neural cell fate choice. Binds to DNA via the target sequence 5'-[AG]TAAA[CT]A-3', with 5'-ATAAACA-3' being the preferred binding site. The protein is Forkhead box protein I1-A (foxi1-a) of Xenopus laevis (African clawed frog).